Here is a 392-residue protein sequence, read N- to C-terminus: Carbamoyl phosphate synthase small chain (392 aa).

Residues 1–174 form a CPSase region; that stretch reads MSKKALLALE…EVIVENPEGD (174 aa). L-glutamine-binding residues include serine 47, glycine 224, and glycine 226. The Glutamine amidotransferase type-1 domain maps to 176–392; it reads SVVVLDSGVK…EFKRLIKEVR (217 aa). Catalysis depends on cysteine 252, which acts as the Nucleophile. Leucine 253, glutamine 256, asparagine 294, glycine 296, and phenylalanine 297 together coordinate L-glutamine. Active-site residues include histidine 367 and glutamate 369.

Belongs to the CarA family. In terms of assembly, composed of two chains; the small (or glutamine) chain promotes the hydrolysis of glutamine to ammonia, which is used by the large (or ammonia) chain to synthesize carbamoyl phosphate. Tetramer of heterodimers (alpha,beta)4.

The catalysed reaction is hydrogencarbonate + L-glutamine + 2 ATP + H2O = carbamoyl phosphate + L-glutamate + 2 ADP + phosphate + 2 H(+). It carries out the reaction L-glutamine + H2O = L-glutamate + NH4(+). Its pathway is amino-acid biosynthesis; L-arginine biosynthesis; carbamoyl phosphate from bicarbonate: step 1/1. It participates in pyrimidine metabolism; UMP biosynthesis via de novo pathway; (S)-dihydroorotate from bicarbonate: step 1/3. Functionally, small subunit of the glutamine-dependent carbamoyl phosphate synthetase (CPSase). CPSase catalyzes the formation of carbamoyl phosphate from the ammonia moiety of glutamine, carbonate, and phosphate donated by ATP, constituting the first step of 2 biosynthetic pathways, one leading to arginine and/or urea and the other to pyrimidine nucleotides. The small subunit (glutamine amidotransferase) binds and cleaves glutamine to supply the large subunit with the substrate ammonia. The polypeptide is Carbamoyl phosphate synthase small chain (Thermotoga maritima (strain ATCC 43589 / DSM 3109 / JCM 10099 / NBRC 100826 / MSB8)).